Consider the following 196-residue polypeptide: Carnitine operon protein CaiE (196 aa).

The interval 177–196 (RQMEENRPRLQGTTDVMPKR) is disordered.

Belongs to the transferase hexapeptide repeat family.

Its pathway is amine and polyamine metabolism; carnitine metabolism. Overproduction of CaiE stimulates the activity of CaiB and CaiD. The sequence is that of Carnitine operon protein CaiE from Escherichia coli O17:K52:H18 (strain UMN026 / ExPEC).